Here is a 427-residue protein sequence, read N- to C-terminus: Zinc finger protein 134 (427 aa).

Residue Lys20 forms a Glycyl lysine isopeptide (Lys-Gly) (interchain with G-Cter in SUMO2) linkage. The C2H2-type 1 zinc-finger motif lies at 50-72 (LPCDICGPILKDILHLDEHQGTH). The segment at 78 to 100 (HTCGACGRQFWFSANLHQYQKCY) adopts a C2H2-type 2; degenerate zinc-finger fold. Glycyl lysine isopeptide (Lys-Gly) (interchain with G-Cter in SUMO2) cross-links involve residues Lys135 and Lys139. 9 consecutive C2H2-type zinc fingers follow at residues 176–198 (YKCS…QRIH), 204–226 (YECS…QRIH), 232–254 (YECS…KRIH), 260–282 (YKCN…QRVH), 288–310 (YKCS…ESIH), 316–338 (YDCS…QRIH), 344–366 (FECI…QRVH), 372–394 (FVCS…QRVH), and 400–422 (YECS…QKVH).

It belongs to the krueppel C2H2-type zinc-finger protein family.

The protein resides in the nucleus. Functionally, may be involved in transcriptional regulation. The polypeptide is Zinc finger protein 134 (ZNF134) (Homo sapiens (Human)).